The chain runs to 359 residues: MVETSTSLVKLEQDGSLFLPPGFRFHPTDAEVILSYLLQKFLNPSFTSLPIGEVDLNKCEPWDLPSKAKMGEKEWYFFSHKDMKYPTGMRTNRATKEGYWKATGKDREIFNLQPTSYGGSSNNKNNKQLVGMKKTLVFYMGRAPKGTKTNWVMHEFRLHANLHNDNPNLRLNLKDEWVVCKVFHKKGDDREAINKQQAQAAAVDQYSAGTPNNGSSVEAGDDDDDLFQLDSIIDPSIYFSNSSAANILSAPPNMSNSVVAANYGASTTTTGTASAGSFQQQPNYCSLINKSISSSNVSSWNNMPPPPPVAEGGVHGIGSSYSLQHQAAMVKALRDVIRLPNPLGMPQYKLDDAYLWDSS.

In terms of domain architecture, NAC spans 19–185 (LPPGFRFHPT…EWVVCKVFHK (167 aa)). Residues 130–191 (VGMKKTLVFY…VFHKKGDDRE (62 aa)) mediate DNA binding.

Expressed in roots. Expressed at low levels in leaves, stems and panicles.

The protein resides in the nucleus. Its function is as follows. Transcription activator involved in responses to drought stress and salt stress. Transactivates the stress response genes LEA19 and PM19L. The chain is NAC domain-containing protein 45 from Oryza sativa subsp. japonica (Rice).